Here is a 791-residue protein sequence, read N- to C-terminus: Probable phosphoketolase (791 aa).

This sequence belongs to the XFP family. The cofactor is thiamine diphosphate.

The chain is Probable phosphoketolase from Chlorobaculum tepidum (strain ATCC 49652 / DSM 12025 / NBRC 103806 / TLS) (Chlorobium tepidum).